The following is a 508-amino-acid chain: Putative inorganic phosphate transporter 1-13 (508 aa).

Residues 1–22 (MAGNQQLRVLHALDIARTQLYH) lie on the Cytoplasmic side of the membrane. A helical membrane pass occupies residues 23–43 (FIAIVIAGMGFFTDAYDLFSI). Topologically, residues 44 to 64 (SLVADLLGHVYYHGELPRNIH) are extracellular. Residues 65–85 (AAVTGIALCGTVPGQLVFGWL) form a helical membrane-spanning segment. Topologically, residues 86-93 (GDKMGRKR) are cytoplasmic. Residues 94-114 (VYGITLLLMVVSSLASGLSFS) traverse the membrane as a helical segment. The Extracellular portion of the chain corresponds to 115-117 (KHE). Residues 118–138 (GMNIIAVLCFFRFWLGVSIGG) traverse the membrane as a helical segment. At 139–159 (DYPLSATIMSEYANKRTRGAF) the chain is on the cytoplasmic side. Residues 160-180 (IAAVFAMQGFGNLAAGIIGMI) form a helical membrane-spanning segment. Residues 181 to 192 (VSAAFKHSSASK) lie on the Extracellular side of the membrane. A helical transmembrane segment spans residues 193–213 (IDYAWRIILMFGAIPAALTYH). Over 214–277 (WRMKMPETAR…FEFLHRHGLH (64 aa)) the chain is Cytoplasmic. The chain crosses the membrane as a helical span at residues 278 to 298 (LLGTTVCWFVLDVTFYSLNIF). Residues 299 to 328 (MKNIFTEVGLLPRLDSEYHHTLQRMITMTA) are Extracellular-facing. The helical transmembrane segment at 329-349 (VHTFISLCGALPGYFFTVAFV) threads the bilayer. Residues 350 to 354 (DRIGR) are Cytoplasmic-facing. Residues 355–375 (VKIQLIGFTMMTVFMLCLAIP) traverse the membrane as a helical segment. Residues 376–389 (YDQWLRHKNKYGFA) are Extracellular-facing. The helical transmembrane segment at 390 to 410 (VMYGLTFFFANFGPNTTTFII) threads the bilayer. Topologically, residues 411-424 (PAEIFPARLRSTCH) are cytoplasmic. The helical transmembrane segment at 425 to 445 (GISGAVGKIGAIVGVFGFLYT) threads the bilayer. At 446-450 (EYHIR) the chain is on the extracellular side. The helical transmembrane segment at 451-471 (IFLFVLIGCNLVGFIFTLLLP) threads the bilayer. Residues 472–508 (ESKGKSLEDLTGEIEEFQEEDEGSEVALSRPIHTVPL) lie on the Cytoplasmic side of the membrane.

The protein belongs to the major facilitator superfamily. Phosphate:H(+) symporter (TC 2.A.1.9) family.

It localises to the membrane. In terms of biological role, high-affinity transporter for external inorganic phosphate. This Oryza sativa subsp. japonica (Rice) protein is Putative inorganic phosphate transporter 1-13 (PHT1-13).